Consider the following 463-residue polypeptide: Mitochondrial dynamics protein MID51 (463 aa).

The Mitochondrial intermembrane segment spans residues 1–23 (MAGAGERKGKKDDNGIGTAIDFV). Residues 24-46 (LSNARLVLGVGGAAMLGIATLAV) form a helical membrane-spanning segment. At 47-463 (KRMYDRAISA…LSEPEVLLQT (417 aa)) the chain is on the cytoplasmic side. The interval 49-195 (MYDRAISAPT…LSGSLYDDLQ (147 aa)) is dimerization. A phosphoserine mark is found at Ser-55, Ser-59, Ser-79, and Ser-94. The interval 57–77 (PTSPTRLSHSGKRSWEEPNWM) is disordered. The interval 160 to 169 (AAVDICAELR) is important for interaction with DNM1L. Positions 187, 189, and 201 each coordinate ADP. An important for interaction with DNM1L region spans residues 234-243 (RRENPEYFPR). Residues Ser-340, Arg-342, and Lys-368 each contribute to the ADP site.

The protein belongs to the MID49/MID51 family. In terms of assembly, homodimer. Interacts with DNM1L.

It is found in the mitochondrion outer membrane. Its function is as follows. Mitochondrial outer membrane protein which regulates mitochondrial fission/fusion dynamics. Promotes the recruitment and association of the fission mediator dynamin-related protein 1 (DNM1L) to the mitochondrial surface independently of the mitochondrial fission FIS1 and MFF proteins. Regulates DNM1L GTPase activity and DNM1L oligomerization. Binds ADP and can also bind GDP, although with lower affinity. Does not bind CDP, UDP, ATP, AMP or GTP. Inhibits DNM1L GTPase activity in the absence of bound ADP. Requires ADP to stimulate DNM1L GTPase activity and the assembly of DNM1L into long, oligomeric tubules with a spiral pattern, as opposed to the ring-like DNM1L oligomers observed in the absence of bound ADP. Does not require ADP for its function in recruiting DNM1L. The chain is Mitochondrial dynamics protein MID51 (Mief1) from Rattus norvegicus (Rat).